The sequence spans 273 residues: NLP effector protein 10 (273 aa).

The signal sequence occupies residues 1–21; that stretch reads MKLPTFLIGFVALLVTSNGSA. Asparagine 91 is a glycosylation site (N-linked (GlcNAc...) asparagine). A Conserved undecapeptide motif motif is present at residues 129–139; the sequence is AIMYAWYLPRA. Positions 149–155 match the Conserved heptapeptide motif motif; that stretch reads GHRHYWL.

It belongs to the Necrosis inducing protein (NPP1) family.

The protein localises to the secreted. In terms of biological role, secreted effector that acts as a pathogen-associated molecular pattern (PAMP) recognized by the plant immune system. Seems not to induce necrosis in Nicotiana benthamiana leaves but significantly improves disease resistance of Arabidopsis thaliana to Hyaloperonospora arabidopsidis and causes an inhibition of plant growth which is typically associated with enhanced immunity when over-expressed in Arabidopsis. In Plasmopara viticola (Downy mildew of grapevine), this protein is NLP effector protein 10.